The following is a 453-amino-acid chain: Tol-Pal system protein TolB (453 aa).

The N-terminal stretch at methionine 1–alanine 39 is a signal peptide.

It belongs to the TolB family. The Tol-Pal system is composed of five core proteins: the inner membrane proteins TolA, TolQ and TolR, the periplasmic protein TolB and the outer membrane protein Pal. They form a network linking the inner and outer membranes and the peptidoglycan layer.

The protein localises to the periplasm. Functionally, part of the Tol-Pal system, which plays a role in outer membrane invagination during cell division and is important for maintaining outer membrane integrity. The chain is Tol-Pal system protein TolB from Gluconobacter oxydans (strain 621H) (Gluconobacter suboxydans).